The primary structure comprises 288 residues: Ice-binding protein (288 aa).

The N-terminal stretch at 1 to 22 (MFSTTLINTFSLGLLAVVSVVA) is a signal peptide. Short sequence motifs (ice-binding site motif (T-A/G-X-T/N)) lie at residues 75–78 (TAGN) and 154–157 (TAFN). N-linked (GlcNAc...) asparagine glycosylation is present at Asn-194. 2 short sequence motifs (ice-binding site motif (T-A/G-X-T/N)) span residues 196 to 199 (TGVT) and 265 to 268 (TGAT).

This sequence belongs to the ice-binding protein family.

Its subcellular location is the secreted. Functionally, binds ice crystals and most probably inhibits their growth in order to prevent cell damage from extracellular ice. In Lentinula edodes (Shiitake mushroom), this protein is Ice-binding protein.